Here is a 607-residue protein sequence, read N- to C-terminus: UvrABC system protein C (607 aa).

A GIY-YIG domain is found at G16–I94. The UVR domain occupies N203–V238.

It belongs to the UvrC family. In terms of assembly, interacts with UvrB in an incision complex.

The protein localises to the cytoplasm. The UvrABC repair system catalyzes the recognition and processing of DNA lesions. UvrC both incises the 5' and 3' sides of the lesion. The N-terminal half is responsible for the 3' incision and the C-terminal half is responsible for the 5' incision. The chain is UvrABC system protein C from Pseudomonas syringae pv. tomato (strain ATCC BAA-871 / DC3000).